The chain runs to 900 residues: Probable 2-oxoadipate dehydrogenase complex component E1 homolog (900 aa).

Belongs to the alpha-ketoglutarate dehydrogenase family. Requires thiamine diphosphate as cofactor.

The protein localises to the mitochondrion. It carries out the reaction N(6)-[(R)-lipoyl]-L-lysyl-[protein] + 2-oxoadipate + H(+) = N(6)-[(R)-S(8)-glutaryldihydrolipoyl]-L-lysyl-[protein] + CO2. 2-oxoadipate dehydrogenase (E1a) component of the 2-oxoadipate dehydrogenase complex (OADHC). Participates in the first step, rate limiting for the overall conversion of 2-oxoadipate (alpha-ketoadipate) to glutaryl-CoA and CO(2) catalyzed by the whole OADHC. Catalyzes the irreversible decarboxylation of 2-oxoadipate via the thiamine diphosphate (ThDP) cofactor and subsequent transfer of the decarboxylated acyl intermediate on an oxidized dihydrolipoyl group that is covalently amidated to the E2 enzyme (dihydrolipoyllysine-residue succinyltransferase or DLST). The chain is Probable 2-oxoadipate dehydrogenase complex component E1 homolog (odhA) from Dictyostelium discoideum (Social amoeba).